A 430-amino-acid chain; its full sequence is Adenylosuccinate synthetase (430 aa).

GTP-binding positions include 12–18 and 40–42; these read GDEGKGK and GHT. Catalysis depends on aspartate 13, which acts as the Proton acceptor. Residues aspartate 13 and glycine 40 each coordinate Mg(2+). IMP contacts are provided by residues 13–16, 38–41, threonine 128, arginine 142, glutamine 223, threonine 238, and arginine 302; these read DEGK and NAGH. Histidine 41 functions as the Proton donor in the catalytic mechanism. 298-304 contacts substrate; that stretch reads TVTKRPR. Residues arginine 304, 330–332, and 412–414 each bind GTP; these read CVD and SVG.

The protein belongs to the adenylosuccinate synthetase family. In terms of assembly, homodimer. Mg(2+) is required as a cofactor.

It localises to the cytoplasm. It carries out the reaction IMP + L-aspartate + GTP = N(6)-(1,2-dicarboxyethyl)-AMP + GDP + phosphate + 2 H(+). Its pathway is purine metabolism; AMP biosynthesis via de novo pathway; AMP from IMP: step 1/2. Functionally, plays an important role in the de novo pathway of purine nucleotide biosynthesis. Catalyzes the first committed step in the biosynthesis of AMP from IMP. In Ligilactobacillus salivarius (strain UCC118) (Lactobacillus salivarius), this protein is Adenylosuccinate synthetase.